Consider the following 1157-residue polypeptide: Probable inactive leucine-rich repeat receptor kinase XIAO (1157 aa).

An N-terminal signal peptide occupies residues 1-21; the sequence is MPPPPRLLFLLVMLLVVAAPG. N-linked (GlcNAc...) asparagine glycosylation is present at asparagine 58. LRR repeat units lie at residues 101 to 125, 127 to 149, 150 to 172, 173 to 196, 198 to 220, 221 to 245, 247 to 269, 270 to 293, 296 to 319, 320 to 343, 344 to 367, 368 to 391, 393 to 414, 415 to 439, 440 to 463, 464 to 487, 489 to 511, 513 to 536, 537 to 559, 561 to 583, 584 to 608, 609 to 631, 632 to 656, 658 to 680, 681 to 704, and 706 to 728; these read LVYL…LSRI, SLRA…FLAN, LTNL…VSFP, PSLK…VSAS, TSLQ…SLGT, LQDL…LSNC, ALLH…VAAI, PSLQ…AFGG, NSSL…VSLG, KDLQ…LAGA, GGLT…VGQL, TALQ…IGRC, ALQV…ALGG, LRRL…LGNL, SWLE…LFVL, GNLT…IGNL, ALQS…IGNL, NLRV…LFGL, PQLQ…GFSS, WSLR…TYGY, LPSL…LANC, SNLT…DFAR, LGEL…ISNC, SLVT…LSNL, SKLQ…LAQI, and GMLS…LGSR. Residue asparagine 149 is glycosylated (N-linked (GlcNAc...) asparagine). N-linked (GlcNAc...) asparagine glycosylation is found at asparagine 192, asparagine 204, and asparagine 244. N-linked (GlcNAc...) asparagine glycosylation occurs at asparagine 296. A glycan (N-linked (GlcNAc...) asparagine) is linked at asparagine 438. 3 N-linked (GlcNAc...) asparagine glycosylation sites follow: asparagine 465, asparagine 494, and asparagine 524. Residues asparagine 567, asparagine 607, asparagine 610, asparagine 655, asparagine 679, asparagine 692, and asparagine 711 are each glycosylated (N-linked (GlcNAc...) asparagine). A helical transmembrane segment spans residues 765 to 785; that stretch reads LALLIGVVAATVLLLVLFCCC. The interval 804-825 is disordered; sequence VKKRRRSPGRGSGSSGTSTDSV. In terms of domain architecture, Protein kinase spans 849–1144; sequence FDEENVLSRG…LEGCRVGPDI (296 aa). Residues 855–863, 930–932, 936–939, 980–985, and aspartate 998 contribute to the ATP site; these read LSRGRHGLV, DYM, NLAT, and DVKPQN.

Belongs to the protein kinase superfamily. Ser/Thr protein kinase family. Expressed in developing culm, coleoptile, primary root, young spikelet, young leaf blade and leaf sheath, floral meristem primordia, stamen primordia, and lemma and palea primordia.

Its subcellular location is the cell membrane. Functions in the early stages of organ development by regulating cell division rate. Is probably involved in the regulation of a number of cell-cycle genes. May act as regulator of brassinosteroid (BR) signaling and cell-cycle controlling organ growth. The chain is Probable inactive leucine-rich repeat receptor kinase XIAO from Oryza sativa subsp. japonica (Rice).